A 269-amino-acid polypeptide reads, in one-letter code: Putative hydro-lyase Swoo_1731 (269 aa).

This sequence belongs to the D-glutamate cyclase family.

The protein is Putative hydro-lyase Swoo_1731 of Shewanella woodyi (strain ATCC 51908 / MS32).